The primary structure comprises 211 residues: Formate dehydrogenase, cytochrome b556(fdo) subunit (211 aa).

Over 1-17 (MKRRDTIVRYTAPERIN) the chain is Cytoplasmic. Position 18 (histidine 18) interacts with heme b. The chain crosses the membrane as a helical span at residues 18 to 32 (HWITAFCFILAAVSG). Over 33–53 (LGFLFPSFNWLMQIMGTPQLA) the chain is Periplasmic. The chain crosses the membrane as a helical span at residues 54–72 (RILHPFVGVVMFASFIIMF). Residue histidine 57 participates in heme b binding. Residues 73–112 (FRYWHHNLINRDDIFWAKNIRKIVVNEEVGDTGRYNFGQK) are Cytoplasmic-facing. The chain crosses the membrane as a helical span at residues 113-130 (CVFWAAIIFLVLLLVSGV). Residues 131-151 (IIWRPYFAPAFSIPVIRFALM) lie on the Periplasmic side of the membrane. Residues 152 to 170 (LHSFAAVALIVVIMVHIYA) traverse the membrane as a helical segment. Residues histidine 153 and histidine 167 each coordinate heme b. Topologically, residues 171–211 (ALWVKGTITAMVEGWVTSAWAKKHHPRWYREVRKTTEKKAE) are cytoplasmic.

Belongs to the formate dehydrogenase gamma subunit family. As to quaternary structure, formate dehydrogenase is a membrane-bound complex, formed by subunits alpha, beta and gamma. Heme serves as cofactor.

The protein resides in the cell inner membrane. Allows to use formate as major electron donor during aerobic respiration. Subunit gamma is probably the cytochrome b556(FDO) component of the formate dehydrogenase. The protein is Formate dehydrogenase, cytochrome b556(fdo) subunit (fdoI) of Escherichia coli O157:H7.